A 94-amino-acid chain; its full sequence is Small ubiquitin-related modifier 3 (94 aa).

K11 is covalently cross-linked (Glycyl lysine isopeptide (Lys-Gly) (interchain with G-Cter in SUMO)). The region spanning 15-92 (DHINLKVAGQ…IDVFQQQTGG (78 aa)) is the Ubiquitin-like domain. G92 participates in a covalent cross-link: Glycyl lysine isopeptide (Gly-Lys) (interchain with K-? in acceptor proteins). Positions 93 to 94 (LC) are excised as a propeptide.

The protein belongs to the ubiquitin family. SUMO subfamily. In terms of assembly, interacts with SAE2 and UBE2I. Covalently attached to a number of proteins. In terms of processing, polymeric chains can be formed through Lys-11 cross-linking. Cleavage of precursor form by a sentrin-specific protease is necessary for function.

It is found in the cytoplasm. Its subcellular location is the nucleus. The protein resides in the PML body. Its function is as follows. Ubiquitin-like protein which can be covalently attached to target lysines either as a monomer or as a lysine-linked polymer. Does not seem to be involved in protein degradation and may function as an antagonist of ubiquitin in the degradation process. Plays a role in a number of cellular processes such as nuclear transport, DNA replication and repair, mitosis and signal transduction. Covalent attachment to its substrates requires prior activation by the E1 complex SAE1-SAE2 and linkage to the E2 enzyme UBE2I. The chain is Small ubiquitin-related modifier 3 from Gallus gallus (Chicken).